We begin with the raw amino-acid sequence, 446 residues long: Amino-acid acetyltransferase (446 aa).

Residues 299–431 (EQVRDAEIDD…SHLPMKKQKL (133 aa)) form the N-acetyltransferase domain.

This sequence belongs to the acetyltransferase family. ArgA subfamily.

Its subcellular location is the cytoplasm. The catalysed reaction is L-glutamate + acetyl-CoA = N-acetyl-L-glutamate + CoA + H(+). It participates in amino-acid biosynthesis; L-arginine biosynthesis; N(2)-acetyl-L-ornithine from L-glutamate: step 1/4. This is Amino-acid acetyltransferase from Aliivibrio fischeri (strain MJ11) (Vibrio fischeri).